Consider the following 506-residue polypeptide: Cytochrome P450 52B1 (506 aa).

Heme is bound at residue C451.

It belongs to the cytochrome P450 family. The cofactor is heme.

Together with an NADPH cytochrome P450 the enzyme system catalyzes the terminal hydroxylation as the first step in the assimilation of alkanes and fatty acids. In Candida tropicalis (Yeast), this protein is Cytochrome P450 52B1 (CYP52B1).